Consider the following 246-residue polypeptide: NAD(P)H-hydrate epimerase (246 aa).

The YjeF N-terminal domain maps to 12–234 (AAEIDKELMG…DFANKFGFEP (223 aa)). 69–73 (NNGGD) is a binding site for (6S)-NADPHX. Positions 70 and 138 each coordinate K(+). (6S)-NADPHX contacts are provided by residues 142 to 148 (GFSFKPP) and aspartate 173. K(+) is bound at residue threonine 176.

Belongs to the NnrE/AIBP family. Requires K(+) as cofactor.

It localises to the cytoplasm. It is found in the mitochondrion. It catalyses the reaction (6R)-NADHX = (6S)-NADHX. The enzyme catalyses (6R)-NADPHX = (6S)-NADPHX. Catalyzes the epimerization of the S- and R-forms of NAD(P)HX, a damaged form of NAD(P)H that is a result of enzymatic or heat-dependent hydration. This is a prerequisite for the S-specific NAD(P)H-hydrate dehydratase to allow the repair of both epimers of NAD(P)HX. The protein is NAD(P)H-hydrate epimerase of Saccharomyces cerevisiae (strain ATCC 204508 / S288c) (Baker's yeast).